Here is a 115-residue protein sequence, read N- to C-terminus: Arsenic resistance transcriptional regulator ArsR2 (115 aa).

One can recognise an HTH arsR-type domain in the interval 1–90 (MITPPDVFKS…EMLQVTLQAN (90 aa)). Arsenite contacts are provided by Cys30 and Cys32. Residues 31–54 (VCELMCALNDSQPKISRHLAQLRS) constitute a DNA-binding region (H-T-H motif).

Homodimer.

The protein localises to the cytoplasm. Its function is as follows. Binds arsenite and regulates the expression of arsenic efflux pumps. In vitro, also binds antimony and bismuth, but not arsenate. The sequence is that of Arsenic resistance transcriptional regulator ArsR2 from Pseudomonas putida (strain ATCC 47054 / DSM 6125 / CFBP 8728 / NCIMB 11950 / KT2440).